A 412-amino-acid polypeptide reads, in one-letter code: FAD-dependent monooxygenase nscC (412 aa).

Positions 1–21 (MGKQQETILIIGAGIAGLTTS) are cleaved as a signal peptide. FAD is bound by residues Glu35 and Ala46. Asn92 carries N-linked (GlcNAc...) asparagine glycosylation. Arg119 lines the FAD pocket. Residues Asn170 and Asn231 are each glycosylated (N-linked (GlcNAc...) asparagine). FAD-binding residues include Asp326 and Gly339.

Belongs to the paxM FAD-dependent monooxygenase family. The cofactor is FAD.

It participates in secondary metabolite biosynthesis. FAD-dependent monooxygenase; part of the gene cluster that mediates the biosynthesis of neosartoricin B, a prenylated anthracenone that probably exhibits T-cell antiproliferative activity, suggestive of a physiological role as an immunosuppressive agent. The non-reducing polyketide synthase nscA probably synthesizes and cyclizes the decaketide backbone. The hydrolase nscB then mediates the product release through hydrolysis followed by spontaneous decarboxylation. The prenyltransferase nscD catalyzes the addition of the dimethylallyl group to the aromatic C5. The FAD-dependent monooxygenase nscC is then responsible for the stereospecific hydroxylation at C2. Neosartoricin B can be converted into two additional compounds neosartoricins C and D. Neosartoricin C is a spirocyclic compound that is cyclized through the attack of C3 hydroxyl on C14, followed by dehydration. On the other hand, neosartoricin D is a further cyclized compound in which attack of C2 on C14 in neosartoricin C results in the formation of the acetal-containing dioxabicyclo-octanone ring. Both of these compounds are novel and possibly represent related metabolites of the gene cluster. The chain is FAD-dependent monooxygenase nscC from Trichophyton verrucosum (strain HKI 0517).